A 302-amino-acid polypeptide reads, in one-letter code: MRLIFMGSPDFSVPVLEALHAHHEVVCVYCQPPRPAGRGKKDRPTPVQTRAEELGLPVRHPTSLRTPEAQAEFAALGAEAAVVVAYGLILPQPILDAPERGCLNIHASLLPRWRGAAPIHRAILAGDEETGICIMQMEAGLDTGPVLMCEKTHIGPEETVQDLHDRLSDMGARLILGALGALDDLVPCPQPDAGVTYAEKIAKAEAGIDWTRPATEIDRQIRGLSPFPGAWTLLNGERVKLLRCRLAEGHGAPGAVLGGLTIACGTGAVEITLAQREGKRPMEPEEFLRGFPLPEGSRAHTS.

108–111 (SLLP) serves as a coordination point for (6S)-5,6,7,8-tetrahydrofolate. Residues 279-288 (KRPMEPEEFL) are compositionally biased toward basic and acidic residues. Positions 279 to 302 (KRPMEPEEFLRGFPLPEGSRAHTS) are disordered.

This sequence belongs to the Fmt family.

The catalysed reaction is L-methionyl-tRNA(fMet) + (6R)-10-formyltetrahydrofolate = N-formyl-L-methionyl-tRNA(fMet) + (6S)-5,6,7,8-tetrahydrofolate + H(+). In terms of biological role, attaches a formyl group to the free amino group of methionyl-tRNA(fMet). The formyl group appears to play a dual role in the initiator identity of N-formylmethionyl-tRNA by promoting its recognition by IF2 and preventing the misappropriation of this tRNA by the elongation apparatus. The protein is Methionyl-tRNA formyltransferase of Cereibacter sphaeroides (strain ATCC 17023 / DSM 158 / JCM 6121 / CCUG 31486 / LMG 2827 / NBRC 12203 / NCIMB 8253 / ATH 2.4.1.) (Rhodobacter sphaeroides).